We begin with the raw amino-acid sequence, 417 residues long: MFDESYSIKNFDDVLFKAISDEKRRQEEHIELIASENYVSPRVLEAQGSVLTNKYAEGYPGKRYYGGCEFVDVAEELAISRAKLLFGAHYVNVQPHSGSQANAAVMMALLSPGDTFMGMALPHGGHLTHGSKVNFSGKLYHSVEYGVDSNTGLIDYDALEKLALQHKPKLIIAGFSAYSRILDWARFREIADKVGAYLMADIAHVAGLVAVGLYPSPVPYADVVTTTTHKTLRGPRGGLILCKENEEIEKKLNSSVFPGMQGGPLMHVIAAKAVAFAEALLPEFKTYQQQVLANARTMCSVLQSRGYDIVSGGTDNHLLLVDLINKGITGKEADAAVGRANITVNKNSVPNDPRSPFVTSGLRLGTPAATTRGFKEREITLLSNWVADVLDNVHDETNISRVKTQVLLLCREFPVYA.

Residues leucine 121 and 125 to 127 (GHL) contribute to the (6S)-5,6,7,8-tetrahydrofolate site. Lysine 230 carries the post-translational modification N6-(pyridoxal phosphate)lysine. 355–357 (SPF) serves as a coordination point for (6S)-5,6,7,8-tetrahydrofolate.

Belongs to the SHMT family. As to quaternary structure, homodimer. It depends on pyridoxal 5'-phosphate as a cofactor.

The protein resides in the cytoplasm. The enzyme catalyses (6R)-5,10-methylene-5,6,7,8-tetrahydrofolate + glycine + H2O = (6S)-5,6,7,8-tetrahydrofolate + L-serine. The protein operates within one-carbon metabolism; tetrahydrofolate interconversion. Its pathway is amino-acid biosynthesis; glycine biosynthesis; glycine from L-serine: step 1/1. Its function is as follows. Catalyzes the reversible interconversion of serine and glycine with tetrahydrofolate (THF) serving as the one-carbon carrier. This reaction serves as the major source of one-carbon groups required for the biosynthesis of purines, thymidylate, methionine, and other important biomolecules. Also exhibits THF-independent aldolase activity toward beta-hydroxyamino acids, producing glycine and aldehydes, via a retro-aldol mechanism. The sequence is that of Serine hydroxymethyltransferase from Legionella pneumophila subsp. pneumophila (strain Philadelphia 1 / ATCC 33152 / DSM 7513).